A 115-amino-acid chain; its full sequence is Large ribosomal subunit protein bL20 (115 aa).

Belongs to the bacterial ribosomal protein bL20 family.

Binds directly to 23S ribosomal RNA and is necessary for the in vitro assembly process of the 50S ribosomal subunit. It is not involved in the protein synthesizing functions of that subunit. This Methylococcus capsulatus (strain ATCC 33009 / NCIMB 11132 / Bath) protein is Large ribosomal subunit protein bL20.